A 472-amino-acid polypeptide reads, in one-letter code: Uronate isomerase (472 aa).

This sequence belongs to the metallo-dependent hydrolases superfamily. Uronate isomerase family.

The enzyme catalyses D-glucuronate = D-fructuronate. It catalyses the reaction aldehydo-D-galacturonate = keto-D-tagaturonate. Its pathway is carbohydrate metabolism; pentose and glucuronate interconversion. The chain is Uronate isomerase from Nostoc punctiforme (strain ATCC 29133 / PCC 73102).